We begin with the raw amino-acid sequence, 198 residues long: HTH-type transcriptional regulator BetI (198 aa).

Positions 8–68 constitute an HTH tetR-type domain; it reads PLRRRELIDA…ATMRHLLREL (61 aa). The H-T-H motif DNA-binding region spans 31–50; the sequence is TVAQIAHEAGVSPALAHHYF.

It functions in the pathway amine and polyamine biosynthesis; betaine biosynthesis via choline pathway [regulation]. Repressor involved in the biosynthesis of the osmoprotectant glycine betaine. It represses transcription of the choline transporter BetT and the genes of BetAB involved in the synthesis of glycine betaine. This Brucella canis (strain ATCC 23365 / NCTC 10854 / RM-666) protein is HTH-type transcriptional regulator BetI.